Consider the following 545-residue polypeptide: Chaperonin GroEL 2 (545 aa).

ATP contacts are provided by residues 29–32, 86–90, glycine 413, 479–481, and aspartate 495; these read TLGP, DGTTT, and NAA.

This sequence belongs to the chaperonin (HSP60) family. As to quaternary structure, forms a cylinder of 14 subunits composed of two heptameric rings stacked back-to-back. Interacts with the co-chaperonin GroES.

It is found in the cytoplasm. It carries out the reaction ATP + H2O + a folded polypeptide = ADP + phosphate + an unfolded polypeptide.. Together with its co-chaperonin GroES, plays an essential role in assisting protein folding. The GroEL-GroES system forms a nano-cage that allows encapsulation of the non-native substrate proteins and provides a physical environment optimized to promote and accelerate protein folding. The chain is Chaperonin GroEL 2 from Prochlorococcus marinus (strain MIT 9312).